We begin with the raw amino-acid sequence, 154 residues long: Superoxide dismutase [Cu-Zn] (154 aa).

H47, H49, and H64 together coordinate Cu cation. Residues C58 and C147 are joined by a disulfide bond. 4 residues coordinate Zn(2+): H64, H72, H81, and D84. Position 121 (H121) interacts with Cu cation. The segment covering 125–136 has biased composition (basic and acidic residues); it reads DDLGKGGNEESL. Residues 125 to 144 form a disordered region; it reads DDLGKGGNEESLKTGNAGPR. R144 provides a ligand contact to substrate.

The protein belongs to the Cu-Zn superoxide dismutase family. In terms of assembly, homodimer. Cu cation serves as cofactor. Zn(2+) is required as a cofactor.

Its subcellular location is the cytoplasm. The enzyme catalyses 2 superoxide + 2 H(+) = H2O2 + O2. Functionally, destroys radicals which are normally produced within the cells and which are toxic to biological systems. The chain is Superoxide dismutase [Cu-Zn] (sod-1) from Neurospora crassa (strain ATCC 24698 / 74-OR23-1A / CBS 708.71 / DSM 1257 / FGSC 987).